The primary structure comprises 305 residues: Protein MFI (305 aa).

In terms of assembly, can homodimerize. Interacts with MFF; the interaction inhibits MFF interaction with DNM1L.

Its subcellular location is the cytoplasm. The protein localises to the cytosol. It localises to the mitochondrion outer membrane. In terms of biological role, acts as an inhibitor of mitochondrial fission. Interacts with MFF and prevents DNM1L recruitment to mitochondria, promoting a more fused mitochondrial network. In Rattus norvegicus (Rat), this protein is Protein MFI.